A 134-amino-acid chain; its full sequence is Small ribosomal subunit protein uS11 (134 aa).

A disordered region spans residues 114 to 134; that stretch reads DVTPVPSDSTRRKGGRRGRRL. Basic residues predominate over residues 125–134; the sequence is RKGGRRGRRL.

This sequence belongs to the universal ribosomal protein uS11 family.

This chain is Small ribosomal subunit protein uS11 (RPS14), found in Candida albicans (Yeast).